The following is a 224-amino-acid chain: Large ribosomal subunit protein uL1 (224 aa).

The protein belongs to the universal ribosomal protein uL1 family. As to quaternary structure, part of the 50S ribosomal subunit.

Its function is as follows. Binds directly to 23S rRNA. The L1 stalk is quite mobile in the ribosome, and is involved in E site tRNA release. In terms of biological role, protein L1 is also a translational repressor protein, it controls the translation of the L11 operon by binding to its mRNA. The chain is Large ribosomal subunit protein uL1 from Borrelia recurrentis (strain A1).